A 461-amino-acid polypeptide reads, in one-letter code: Bifunctional protein GlmU (461 aa).

The interval 1–232 is pyrophosphorylase; that stretch reads MNLQIIILAA…SFEVQGINNR (232 aa). Residues 8–11, K22, Q73, and 78–79 contribute to the UDP-N-acetyl-alpha-D-glucosamine site; these read LAAG and GT. A Mg(2+)-binding site is contributed by D102. Positions 142, 157, and 230 each coordinate UDP-N-acetyl-alpha-D-glucosamine. Residue N230 participates in Mg(2+) binding. Residues 233–253 are linker; that stretch reads QQLQQLERIWQQRAANQLMEK. An N-acetyltransferase region spans residues 254–461; it reads GATLADANRF…WKRPVKRERD (208 aa). Residues R336 and K354 each contribute to the UDP-N-acetyl-alpha-D-glucosamine site. The active-site Proton acceptor is the H366. Y369 and N380 together coordinate UDP-N-acetyl-alpha-D-glucosamine. Residues A383, 389–390, S408, and A426 each bind acetyl-CoA; that span reads NY.

In the N-terminal section; belongs to the N-acetylglucosamine-1-phosphate uridyltransferase family. This sequence in the C-terminal section; belongs to the transferase hexapeptide repeat family. Homotrimer. The cofactor is Mg(2+).

Its subcellular location is the cytoplasm. The enzyme catalyses alpha-D-glucosamine 1-phosphate + acetyl-CoA = N-acetyl-alpha-D-glucosamine 1-phosphate + CoA + H(+). It carries out the reaction N-acetyl-alpha-D-glucosamine 1-phosphate + UTP + H(+) = UDP-N-acetyl-alpha-D-glucosamine + diphosphate. It participates in nucleotide-sugar biosynthesis; UDP-N-acetyl-alpha-D-glucosamine biosynthesis; N-acetyl-alpha-D-glucosamine 1-phosphate from alpha-D-glucosamine 6-phosphate (route II): step 2/2. The protein operates within nucleotide-sugar biosynthesis; UDP-N-acetyl-alpha-D-glucosamine biosynthesis; UDP-N-acetyl-alpha-D-glucosamine from N-acetyl-alpha-D-glucosamine 1-phosphate: step 1/1. It functions in the pathway bacterial outer membrane biogenesis; LPS lipid A biosynthesis. Catalyzes the last two sequential reactions in the de novo biosynthetic pathway for UDP-N-acetylglucosamine (UDP-GlcNAc). The C-terminal domain catalyzes the transfer of acetyl group from acetyl coenzyme A to glucosamine-1-phosphate (GlcN-1-P) to produce N-acetylglucosamine-1-phosphate (GlcNAc-1-P), which is converted into UDP-GlcNAc by the transfer of uridine 5-monophosphate (from uridine 5-triphosphate), a reaction catalyzed by the N-terminal domain. This is Bifunctional protein GlmU from Legionella pneumophila subsp. pneumophila (strain Philadelphia 1 / ATCC 33152 / DSM 7513).